The chain runs to 269 residues: Diaminopimelate epimerase (269 aa).

Residues N15, Q49, and N66 each contribute to the substrate site. The active-site Proton donor is the C75. Residues 76-77, N155, N187, and 204-205 contribute to the substrate site; these read GN and ER. C213 functions as the Proton acceptor in the catalytic mechanism. 214–215 contacts substrate; the sequence is GS.

The protein belongs to the diaminopimelate epimerase family. Homodimer.

Its subcellular location is the cytoplasm. It catalyses the reaction (2S,6S)-2,6-diaminopimelate = meso-2,6-diaminopimelate. It functions in the pathway amino-acid biosynthesis; L-lysine biosynthesis via DAP pathway; DL-2,6-diaminopimelate from LL-2,6-diaminopimelate: step 1/1. Catalyzes the stereoinversion of LL-2,6-diaminopimelate (L,L-DAP) to meso-diaminopimelate (meso-DAP), a precursor of L-lysine and an essential component of the bacterial peptidoglycan. This is Diaminopimelate epimerase from Rickettsia bellii (strain OSU 85-389).